Consider the following 209-residue polypeptide: N-acetyltransferase aca1 (209 aa).

Residues 26–202 (TNVKNKEELL…DAYIYQYHFP (177 aa)) form the N-acetyltransferase domain. Residue asparagine 118 participates in substrate binding. 128–133 (RSKGIG) is a CoA binding site. A substrate-binding site is contributed by 155–156 (NL).

The protein belongs to the acetyltransferase family. Homodimer.

It is found in the cytoplasm. It localises to the mitochondrion. It carries out the reaction L-glutamate 5-semialdehyde + acetyl-CoA = N-acetyl-L-glutamate 5-semialdehyde + CoA + H(+). Its function is as follows. N-acetyltransferase involved in oxidative stress resistance. Acetylates the toxic proline metabolism intermediate (S)-1-pyrroline-5-carboxylate (P5C), or more likely its spontaneously forming tautomer glutamate-5-semialdehyde (GSA) into N-acetyl-GSA for arginine synthesis in the mitochondria. P5C has been shown to increase the levels of reactive oxygen species (ROS) in the cell by inhibiting the function of the respiratory chain in the mitochondria. The enzyme is able to reduce intracellular ROS levels under P5C-induced oxidative stress and protects cells from damage by oxidative stress. Also acetylates and thereby detoxifies the proline analog azetidine-2-carboxylate (AZC), however it is unlikely that AZC is a natural substrate as it occurs only in plants belonging to the Lilaceae family. This is N-acetyltransferase aca1 from Schizosaccharomyces pombe (strain 972 / ATCC 24843) (Fission yeast).